A 725-amino-acid chain; its full sequence is Prolyl 3-hydroxylase 1 (725 aa).

Positions 1–14 (MALLLPLLPLLVWA) are cleaved as a signal peptide. The TPR 1 repeat unit spans residues 36–69 (PDALFAAGAEAYARGDWPAVVLQMERALRARAAI). N-linked (GlcNAc...) asparagine glycosylation is present at Asn82. TPR repeat units follow at residues 136 to 169 (RSPY…NPEH), 198 to 231 (HMTE…YFVA), and 294 to 327 (PSHF…FPND). Residues 394 to 441 (KRLREKQKVERETAARISEEIGNLMKEIETLVEEKAKESAEMSKFIRE) adopt a coiled-coil conformation. 2 N-linked (GlcNAc...) asparagine glycosylation sites follow: Asn460 and Asn533. The Fe2OG dioxygenase domain occupies 557 to 671 (SHLVCRTAID…RCAIALWFTL (115 aa)). Residues His580, Asp582, and His652 each coordinate Fe cation. Arg662 is an active-site residue. Polar residues predominate over residues 701 to 715 (ETSAEQEPTAATSTA). The tract at residues 701 to 725 (ETSAEQEPTAATSTAGLHAAGKDEL) is disordered. The Prevents secretion from ER signature appears at 722–725 (KDEL).

This sequence belongs to the leprecan family. As to quaternary structure, binds unfolded collagen in a complex with CYPB and CRTAP. It depends on Fe cation as a cofactor. L-ascorbate is required as a cofactor. In terms of tissue distribution, expressed in embryonic dermis, tendon, cartilage, liver and kidney. Expression in the kidney is restricted to the calyx. In the liver, expression is restricted to the interlobular septum.

Its subcellular location is the endoplasmic reticulum. The enzyme catalyses L-prolyl-[collagen] + 2-oxoglutarate + O2 = trans-3-hydroxy-L-prolyl-[collagen] + succinate + CO2. Functionally, has prolyl 3-hydroxylase activity catalyzing the post-translational formation of 3-hydroxyproline in -Xaa-Pro-Gly-sequences in collagens, especially types IV and V. May be involved in the secretoty pathway of cells. Has growth suppressive activity in fibroblasts. The sequence is that of Prolyl 3-hydroxylase 1 from Gallus gallus (Chicken).